The primary structure comprises 1759 residues: Protein TIC 214 (1759 aa).

The next 5 membrane-spanning stretches (helical) occupy residues 23–45 (VVVG…LFLL), 64–84 (FITG…HLAL), 129–149 (IFFQ…SSIF), 172–192 (IGWI…LICI), and 221–241 (IFVV…PPPF).

It belongs to the TIC214 family. As to quaternary structure, part of the Tic complex.

Its subcellular location is the plastid. The protein localises to the chloroplast inner membrane. Functionally, involved in protein precursor import into chloroplasts. May be part of an intermediate translocation complex acting as a protein-conducting channel at the inner envelope. This is Protein TIC 214 from Phaseolus vulgaris (Kidney bean).